Reading from the N-terminus, the 203-residue chain is Alpha-amylase/subtilisin inhibitor (203 aa).

A compositionally biased stretch (polar residues) spans methionine 1 to proline 12. Residues methionine 1–alanine 22 form the signal peptide. A disordered region spans residues methionine 1–histidine 34. A compositionally biased stretch (pro residues) spans tryptophan 15–proline 26. 2 disulfides stabilise this stretch: cysteine 65–cysteine 112 and cysteine 166–cysteine 170.

The protein belongs to the protease inhibitor I3 (leguminous Kunitz-type inhibitor) family.

Functionally, this protein inhibits independently subtilisin and alpha-amylase. The polypeptide is Alpha-amylase/subtilisin inhibitor (Hordeum vulgare (Barley)).